The sequence spans 224 residues: MNQKKAVILLSGGLDSATVVAMAKADGYACYTMSFDYGQRHRAELQAAERVARQLGVIEHKVIGLDLNGMGGSALTDESIAVPESPSEGIPVTYVPARNTVFLSLALGWAEVLDARDIFIGVNAVDYSGYPDCRPEFVEAFERMANLATKAGVEGNGFRIQAPLQYLSKAQIIQAGVARGVDYGLTVSCYQADEQGRACGKCDSCRLRADGFAAAGISDPTPYF.

10–20 (LSGGLDSATVV) is a binding site for ATP. The Zn(2+) site is built by C189, C199, C202, and C205.

This sequence belongs to the QueC family. The cofactor is Zn(2+).

It catalyses the reaction 7-carboxy-7-deazaguanine + NH4(+) + ATP = 7-cyano-7-deazaguanine + ADP + phosphate + H2O + H(+). It functions in the pathway purine metabolism; 7-cyano-7-deazaguanine biosynthesis. Catalyzes the ATP-dependent conversion of 7-carboxy-7-deazaguanine (CDG) to 7-cyano-7-deazaguanine (preQ(0)). The sequence is that of 7-cyano-7-deazaguanine synthase from Pseudomonas aeruginosa (strain LESB58).